A 271-amino-acid chain; its full sequence is Ribonuclease 3 (271 aa).

The RNase III domain occupies Pro-5–Gly-139. Glu-52 lines the Mg(2+) pocket. The active site involves Asp-56. Mg(2+) is bound by residues Asp-125 and Glu-128. Residue Glu-128 is part of the active site. Residues Asn-172–Gly-241 enclose the DRBM domain. The disordered stretch occupies residues Gly-241–Thr-271. Acidic residues predominate over residues Ser-251–Asp-261.

It belongs to the ribonuclease III family. In terms of assembly, homodimer. Requires Mg(2+) as cofactor.

The protein localises to the cytoplasm. The enzyme catalyses Endonucleolytic cleavage to 5'-phosphomonoester.. Its function is as follows. Digests double-stranded RNA. Involved in the processing of primary rRNA transcript to yield the immediate precursors to the large and small rRNAs (23S and 16S). Processes some mRNAs, and tRNAs when they are encoded in the rRNA operon. Processes pre-crRNA and tracrRNA of type II CRISPR loci if present in the organism. The protein is Ribonuclease 3 of Solibacter usitatus (strain Ellin6076).